The sequence spans 36 residues: Photosystem II reaction center protein M (36 aa).

Residues 5–25 (ILGVIATALFIIIPTSFLLIL) traverse the membrane as a helical segment.

Belongs to the PsbM family. In terms of assembly, PSII is composed of 1 copy each of membrane proteins PsbA, PsbB, PsbC, PsbD, PsbE, PsbF, PsbH, PsbI, PsbJ, PsbK, PsbL, PsbM, PsbT, PsbX, PsbY, PsbZ, Psb30/Ycf12, at least 3 peripheral proteins of the oxygen-evolving complex and a large number of cofactors. It forms dimeric complexes.

It localises to the plastid. The protein resides in the chloroplast thylakoid membrane. In terms of biological role, one of the components of the core complex of photosystem II (PSII). PSII is a light-driven water:plastoquinone oxidoreductase that uses light energy to abstract electrons from H(2)O, generating O(2) and a proton gradient subsequently used for ATP formation. It consists of a core antenna complex that captures photons, and an electron transfer chain that converts photonic excitation into a charge separation. This subunit is found at the monomer-monomer interface. The protein is Photosystem II reaction center protein M of Chlorella vulgaris (Green alga).